Here is a 481-residue protein sequence, read N- to C-terminus: UDP-N-acetylmuramoylalanine--D-glutamate ligase (481 aa).

Residue 108–114 (GTNGKTS) participates in ATP binding.

This sequence belongs to the MurCDEF family.

It localises to the cytoplasm. It carries out the reaction UDP-N-acetyl-alpha-D-muramoyl-L-alanine + D-glutamate + ATP = UDP-N-acetyl-alpha-D-muramoyl-L-alanyl-D-glutamate + ADP + phosphate + H(+). The protein operates within cell wall biogenesis; peptidoglycan biosynthesis. In terms of biological role, cell wall formation. Catalyzes the addition of glutamate to the nucleotide precursor UDP-N-acetylmuramoyl-L-alanine (UMA). The sequence is that of UDP-N-acetylmuramoylalanine--D-glutamate ligase from Bifidobacterium longum subsp. infantis (strain ATCC 15697 / DSM 20088 / JCM 1222 / NCTC 11817 / S12).